Reading from the N-terminus, the 177-residue chain is Large ribosomal subunit protein uL6 (177 aa).

It belongs to the universal ribosomal protein uL6 family. As to quaternary structure, part of the 50S ribosomal subunit.

Its function is as follows. This protein binds to the 23S rRNA, and is important in its secondary structure. It is located near the subunit interface in the base of the L7/L12 stalk, and near the tRNA binding site of the peptidyltransferase center. This Janthinobacterium sp. (strain Marseille) (Minibacterium massiliensis) protein is Large ribosomal subunit protein uL6.